The primary structure comprises 1043 residues: BAG family molecular chaperone regulator 6 (1043 aa).

Disordered regions lie at residues 253-294, 311-331, 343-366, 410-500, and 533-566; these read KEEL…GKTV, DVKE…PYPI, VEAS…SDLH, NIPV…AESR, and SVES…KKSF. 4 stretches are compositionally biased toward basic and acidic residues: residues 311-324, 343-357, 416-443, and 478-487; these read DVKE…KEEP, VEAS…EGRN, SENH…KKEQ, and KRMEKSKETK. Residues 534–543 show a composition bias toward polar residues; the sequence is VESNSNLQEE. The segment covering 550 to 566 has biased composition (basic and acidic residues); sequence KPCEAKENREQPAKKSF. An IQ domain is found at 568–597; sequence EEEAARIIQSMYRGYDVRRWEPIKKLKEIA. A BAG domain is found at 595 to 672; the sequence is EIATVREQMG…SIQDKLDSLK (78 aa). Residues 724 to 741 show a composition bias toward basic and acidic residues; the sequence is SPEEHPMSVLNRTDEKQA. Disordered stretches follow at residues 724–749, 764–799, 817–975, and 1015–1043; these read SPEE…ETEE, ATEN…GNGM, EPIN…ISKE, and EKKL…DAVL. Residues 840–852 show a composition bias toward low complexity; that stretch reads ASEVSEAETNSSE. Residues 853–871 are compositionally biased toward basic and acidic residues; the sequence is NENRKGEDDIVLHSEKNVE. 2 stretches are compositionally biased toward polar residues: residues 885-899 and 919-932; these read QPLS…TREG and SPNN…QTSE. Basic and acidic residues predominate over residues 934–951; the sequence is QDEKEQSPETEVIVKEQP. Residues 971-1024 adopt a coiled-coil conformation; sequence GISKETKKLMEENQRFKETMETLVKAGREQLEVISKLTSRVKSLEKKLSHKKKT. Over residues 1018–1031 the composition is skewed to basic residues; it reads LSHKKKTQIRRRAS. The segment covering 1034 to 1043 has biased composition (polar residues); it reads MSVSPTDAVL.

Binds to the ATPase domain of HSP70/HSC70 chaperones. Interacts with calmodulins CAM1, CAM2, CAM3, CAM4, CAM6 and CAM7. Interacts with BAGP1 and APCB1. Detected in stems, leaves, flowers and roots.

Its function is as follows. Co-chaperone that regulates diverse cellular pathways, such as programmed cell death and stress responses. Involved in plant basal resistance. Involved in basal heat response through the regulation of the heat induced small HSP (sHSP) transcriptional cascade. In terms of biological role, induces autophagy. The polypeptide is BAG family molecular chaperone regulator 6 (Arabidopsis thaliana (Mouse-ear cress)).